We begin with the raw amino-acid sequence, 144 residues long: Transcription antitermination protein NusB (144 aa).

Belongs to the NusB family.

Its function is as follows. Involved in transcription antitermination. Required for transcription of ribosomal RNA (rRNA) genes. Binds specifically to the boxA antiterminator sequence of the ribosomal RNA (rrn) operons. The chain is Transcription antitermination protein NusB from Haemophilus influenzae (strain 86-028NP).